Consider the following 152-residue polypeptide: Transcriptional repressor NrdR (152 aa).

A zinc finger lies at 3-34 (CPKCTSIEDKVIDSRISKEGSTIRRRRECLEC). The region spanning 49–139 (IVVIKRDGRR…VYKEFRDVSE (91 aa)) is the ATP-cone domain.

Belongs to the NrdR family. The cofactor is Zn(2+).

In terms of biological role, negatively regulates transcription of bacterial ribonucleotide reductase nrd genes and operons by binding to NrdR-boxes. In Opitutus terrae (strain DSM 11246 / JCM 15787 / PB90-1), this protein is Transcriptional repressor NrdR.